We begin with the raw amino-acid sequence, 63 residues long: Large ribosomal subunit protein uL29 (63 aa).

The protein belongs to the universal ribosomal protein uL29 family.

The polypeptide is Large ribosomal subunit protein uL29 (Glaesserella parasuis serovar 5 (strain SH0165) (Haemophilus parasuis)).